Here is a 204-residue protein sequence, read N- to C-terminus: High frequency lysogenization protein HflD homolog (204 aa).

This sequence belongs to the HflD family.

The protein resides in the cytoplasm. It is found in the cell inner membrane. The sequence is that of High frequency lysogenization protein HflD homolog from Xanthomonas campestris pv. campestris (strain ATCC 33913 / DSM 3586 / NCPPB 528 / LMG 568 / P 25).